We begin with the raw amino-acid sequence, 199 residues long: Altered inheritance of mitochondria protein 11 (199 aa).

Transmembrane regions (helical) follow at residues 79–101 and 129–151; these read MALFYGFTVATFICSKIAYRGVI and VFHSTSLAITSLGMASTGVLWYY.

Belongs to the AIM11 family.

It is found in the membrane. In Komagataella phaffii (strain GS115 / ATCC 20864) (Yeast), this protein is Altered inheritance of mitochondria protein 11 (AIM11).